Reading from the N-terminus, the 372-residue chain is MLVAVVKELKQGEGRVACTPENVRKLTDAGHKVIVEKNAGIGSGFSNDMYEKEGAKIVTHEQAWEADLVIKVKEPHESEYQYFKKNQIIWGFLHLASSKEIVEKMQEVGVTAISGETIIKNGKAELLAPMSAIAGQRSAIMGAYYSEAQHGGQGTLVTGVHENVDIPGSTYVIFGGGVAATNAANVALGLNAKVIIIELNDDRIKYLEDMYAEKDVTVVKSTPENLAEQIKKADVFISTILIPGAKPPKLVTREMVKSMKKGSVLIDIAIDQGGTIETIRPTTISDPVYEEEGVIHYGVPNQPGAVPRTSTMALAQGNIDYILEICDKGLEQAIKDNEALSTGVNIYQGQVTNQGLASSHDLDYKEILNVIE.

His-94 is a catalytic residue. 170–200 (TYVIFGGGVAATNAANVALGLNAKVIIIELN) serves as a coordination point for NAD(+).

The protein belongs to the AlaDH/PNT family.

It catalyses the reaction L-alanine + NAD(+) + H2O = pyruvate + NH4(+) + NADH + H(+). Its pathway is amino-acid degradation; L-alanine degradation via dehydrogenase pathway; NH(3) and pyruvate from L-alanine: step 1/1. May play a role in cell wall synthesis as L-alanine is an important constituent of the peptidoglycan layer. This chain is Alanine dehydrogenase 1 (ald1), found in Staphylococcus aureus (strain USA300).